A 1203-amino-acid chain; its full sequence is Transmembrane channel-like protein 2 (1203 aa).

Disordered regions lie at residues 1 to 39 and 64 to 90; these read MPKS…IDSR and PHTR…EASK. Residues 73–86 show a composition bias toward acidic residues; the sequence is FDDDDDEFDEEDDK. A helical transmembrane segment spans residues 191 to 213; sequence VLGVNITITFIMCMFVVIPEWLA. A glycan (N-linked (GlcNAc...) asparagine) is linked at Asn225. 6 helical membrane-spanning segments follow: residues 276–298, 369–391, 406–428, 441–463, 665–687, and 714–736; these read YRVP…FIIL, FVAR…WAIM, ATAI…LGKI, LGRV…MLQL, MIWL…LIIL, and FFFA…VIAS. The N-linked (GlcNAc...) asparagine glycan is linked to Asn748. The helical transmembrane segment at 780-802 threads the bilayer; the sequence is IIIPVLVLLSLVIYFLIAMVTGL. Disordered regions lie at residues 826-908, 927-1039, 1059-1087, and 1112-1203; these read ELAG…SLPP, KYGR…IEKQ, ATVE…HEPL, and NDET…SDND. Over residues 865-874 the composition is skewed to polar residues; it reads NRSTAKSVSG. Low complexity predominate over residues 898–908; that stretch reads DSESTTSSLPP. The span at 927–945 shows a compositional bias: basic and acidic residues; sequence KYGRHDDIEMEEGGGRLRE. 2 stretches are compositionally biased toward low complexity: residues 973–997 and 1022–1035; these read QSFD…PSNS and SASS…PSSS. Positions 1061-1076 are enriched in polar residues; sequence VENSSQDPTRPPSTDD. Basic and acidic residues-rich tracts occupy residues 1133–1147 and 1172–1203; these read SPRE…KDQQ and PPSE…SDND.

This sequence belongs to the TMC family.

The protein resides in the membrane. Functionally, probable ion channel. The chain is Transmembrane channel-like protein 2 (tmc-2) from Caenorhabditis elegans.